We begin with the raw amino-acid sequence, 356 residues long: Probable cysteine protease RDL6 (356 aa).

The signal sequence occupies residues 1–26; sequence MGFVRPVCMTILFLLIVFVLSAPSSA. The propeptide at 27–132 is activation peptide; it reads MDLPATSGGH…RRYVPLAGDQ (106 aa). Asn37 and Asn86 each carry an N-linked (GlcNAc...) asparagine glycan. Intrachain disulfides connect Cys154-Cys195, Cys188-Cys229, and Cys288-Cys339. Cys157 is an active-site residue. Active-site residues include His294 and Asn314.

Belongs to the peptidase C1 family.

Probable thiol protease. In Arabidopsis thaliana (Mouse-ear cress), this protein is Probable cysteine protease RDL6.